A 399-amino-acid chain; its full sequence is Elongation factor Tu (399 aa).

The tr-type G domain occupies 10–204 (KDHVNIGTIG…AVDDYIDTPE (195 aa)). The tract at residues 19–26 (GHVDHGKT) is G1. 19–26 (GHVDHGKT) is a GTP binding site. Residue Thr-26 participates in Mg(2+) binding. Positions 60–64 (GITIN) are G2. The G3 stretch occupies residues 81–84 (DCPG). Residues 81–85 (DCPGH) and 136–139 (NKKD) contribute to the GTP site. Residues 136-139 (NKKD) form a G4 region. Positions 174-176 (SAL) are G5.

This sequence belongs to the TRAFAC class translation factor GTPase superfamily. Classic translation factor GTPase family. EF-Tu/EF-1A subfamily. As to quaternary structure, monomer.

It is found in the cytoplasm. The catalysed reaction is GTP + H2O = GDP + phosphate + H(+). Its function is as follows. GTP hydrolase that promotes the GTP-dependent binding of aminoacyl-tRNA to the A-site of ribosomes during protein biosynthesis. This is Elongation factor Tu from Synechocystis sp. (strain ATCC 27184 / PCC 6803 / Kazusa).